Reading from the N-terminus, the 85-residue chain is Large ribosomal subunit protein bL27 (85 aa).

The segment at Met-1–Gly-22 is disordered.

This sequence belongs to the bacterial ribosomal protein bL27 family.

The protein is Large ribosomal subunit protein bL27 of Geobacter metallireducens (strain ATCC 53774 / DSM 7210 / GS-15).